Consider the following 134-residue polypeptide: Phosphoribosyl-AMP cyclohydrolase (134 aa).

Residue Asp-93 coordinates Mg(2+). Cys-94 provides a ligand contact to Zn(2+). Mg(2+)-binding residues include Asp-95 and Asp-97. Zn(2+) is bound by residues Cys-112 and Cys-119.

This sequence belongs to the PRA-CH family. Homodimer. Requires Mg(2+) as cofactor. It depends on Zn(2+) as a cofactor.

Its subcellular location is the cytoplasm. The catalysed reaction is 1-(5-phospho-beta-D-ribosyl)-5'-AMP + H2O = 1-(5-phospho-beta-D-ribosyl)-5-[(5-phospho-beta-D-ribosylamino)methylideneamino]imidazole-4-carboxamide. It functions in the pathway amino-acid biosynthesis; L-histidine biosynthesis; L-histidine from 5-phospho-alpha-D-ribose 1-diphosphate: step 3/9. In terms of biological role, catalyzes the hydrolysis of the adenine ring of phosphoribosyl-AMP. In Caulobacter sp. (strain K31), this protein is Phosphoribosyl-AMP cyclohydrolase.